A 295-amino-acid chain; its full sequence is 4-hydroxy-tetrahydrodipicolinate synthase (295 aa).

Thr47 contributes to the pyruvate binding site. Tyr135 functions as the Proton donor/acceptor in the catalytic mechanism. The Schiff-base intermediate with substrate role is filled by Lys163. Pyruvate is bound at residue Ile206.

This sequence belongs to the DapA family. As to quaternary structure, homodimer.

It localises to the cytoplasm. It catalyses the reaction L-aspartate 4-semialdehyde + pyruvate = (2S,4S)-4-hydroxy-2,3,4,5-tetrahydrodipicolinate + H2O + H(+). Its pathway is amino-acid biosynthesis; L-lysine biosynthesis via DAP pathway; (S)-tetrahydrodipicolinate from L-aspartate: step 3/4. In terms of biological role, catalyzes the condensation of (S)-aspartate-beta-semialdehyde [(S)-ASA] and pyruvate to 4-hydroxy-tetrahydrodipicolinate (HTPA). The chain is 4-hydroxy-tetrahydrodipicolinate synthase from Staphylococcus aureus (strain Mu50 / ATCC 700699).